The chain runs to 271 residues: Neurexophilin-1 (271 aa).

The first 21 residues, 1 to 21 (MQAACWYVLFLLQPTVYLVTC), serve as a signal peptide directing secretion. The segment at 22-97 (ANLTNGGKSE…WDWLRNSTDL (76 aa)) is II. 6 N-linked (GlcNAc...) asparagine glycosylation sites follow: N23, N68, N93, N146, N156, and N162. Positions 98–176 (QEPRPRAKRR…LVPPTKIVEF (79 aa)) are III. The segment at 177–185 (DLAQQTVID) is IV (linker domain). A v (Cys-rich) region spans residues 186-271 (AKDSKSFNCR…HSDTPYFPSG (86 aa)).

This sequence belongs to the neurexophilin family.

It is found in the secreted. Its function is as follows. May be signaling molecules that resemble neuropeptides and that act by binding to alpha-neurexins and possibly other receptors. This is Neurexophilin-1 (NXPH1) from Homo sapiens (Human).